The primary structure comprises 278 residues: Ribosomal RNA small subunit methyltransferase J (278 aa).

Residues E143–R144 and D197 each bind S-adenosyl-L-methionine.

The protein belongs to the methyltransferase superfamily. RsmJ family.

The protein localises to the cytoplasm. The catalysed reaction is guanosine(1516) in 16S rRNA + S-adenosyl-L-methionine = N(2)-methylguanosine(1516) in 16S rRNA + S-adenosyl-L-homocysteine + H(+). In terms of biological role, specifically methylates the guanosine in position 1516 of 16S rRNA. The polypeptide is Ribosomal RNA small subunit methyltransferase J (Marinobacter nauticus (strain ATCC 700491 / DSM 11845 / VT8) (Marinobacter aquaeolei)).